Consider the following 442-residue polypeptide: NADH-quinone oxidoreductase subunit D (442 aa).

Belongs to the complex I 49 kDa subunit family. In terms of assembly, NDH-1 is composed of 14 different subunits. Subunits NuoB, C, D, E, F, and G constitute the peripheral sector of the complex.

Its subcellular location is the cell membrane. The enzyme catalyses a quinone + NADH + 5 H(+)(in) = a quinol + NAD(+) + 4 H(+)(out). NDH-1 shuttles electrons from NADH, via FMN and iron-sulfur (Fe-S) centers, to quinones in the respiratory chain. The immediate electron acceptor for the enzyme in this species is believed to be a menaquinone. Couples the redox reaction to proton translocation (for every two electrons transferred, four hydrogen ions are translocated across the cytoplasmic membrane), and thus conserves the redox energy in a proton gradient. The sequence is that of NADH-quinone oxidoreductase subunit D from Mycolicibacterium smegmatis (strain ATCC 700084 / mc(2)155) (Mycobacterium smegmatis).